The following is a 306-amino-acid chain: uncharacterized protein (306 aa).

The protein belongs to the asfivirus CP312R family.

The protein resides in the virion. This is an uncharacterized protein from African swine fever virus (isolate Pig/Kenya/KEN-50/1950) (ASFV).